The following is a 441-amino-acid chain: Histidinol dehydrogenase (441 aa).

NAD(+)-binding residues include Tyr136, Gln197, and Asn220. Residues Ser243, Gln265, and His268 each coordinate substrate. Zn(2+) contacts are provided by Gln265 and His268. Residues Glu333 and His334 each act as proton acceptor in the active site. Residues His334, Asp367, Glu421, and His426 each contribute to the substrate site. A Zn(2+)-binding site is contributed by Asp367. Residue His426 coordinates Zn(2+).

This sequence belongs to the histidinol dehydrogenase family. Requires Zn(2+) as cofactor.

It carries out the reaction L-histidinol + 2 NAD(+) + H2O = L-histidine + 2 NADH + 3 H(+). It participates in amino-acid biosynthesis; L-histidine biosynthesis; L-histidine from 5-phospho-alpha-D-ribose 1-diphosphate: step 9/9. Functionally, catalyzes the sequential NAD-dependent oxidations of L-histidinol to L-histidinaldehyde and then to L-histidine. The chain is Histidinol dehydrogenase from Pseudomonas putida (strain ATCC 47054 / DSM 6125 / CFBP 8728 / NCIMB 11950 / KT2440).